Here is a 249-residue protein sequence, read N- to C-terminus: NAD-dependent protein deacylase 2 (249 aa).

The 240-residue stretch at 1–240 (MNVADLLASS…PRLVEEVKRR (240 aa)) folds into the Deacetylase sirtuin-type domain. 18-37 (GAGISAESGVPTFRGPGGLW) contacts NAD(+). Substrate is bound by residues Tyr62 and Arg65. An NAD(+)-binding site is contributed by 96–99 (QNVD). His114 functions as the Proton acceptor in the catalytic mechanism. Zn(2+) is bound by residues Cys122, Cys125, Cys142, and Cys145. NAD(+)-binding positions include 182–184 (GTS), 208–210 (NVE), and Ala226.

This sequence belongs to the sirtuin family. Class III subfamily. Requires Zn(2+) as cofactor.

Its subcellular location is the cytoplasm. It carries out the reaction N(6)-acetyl-L-lysyl-[protein] + NAD(+) + H2O = 2''-O-acetyl-ADP-D-ribose + nicotinamide + L-lysyl-[protein]. It catalyses the reaction N(6)-succinyl-L-lysyl-[protein] + NAD(+) + H2O = 2''-O-succinyl-ADP-D-ribose + nicotinamide + L-lysyl-[protein]. NAD-dependent lysine deacetylase and desuccinylase that specifically removes acetyl and succinyl groups on target proteins. Modulates the activities of several proteins which are inactive in their acylated form. Deacetylates the N-terminal lysine residue of Alba, the major archaeal chromatin protein and that, in turn, increases Alba's DNA binding affinity, thereby repressing transcription. This is NAD-dependent protein deacylase 2 from Pyrobaculum aerophilum (strain ATCC 51768 / DSM 7523 / JCM 9630 / CIP 104966 / NBRC 100827 / IM2).